The chain runs to 415 residues: Probable RAD2-like endonuclease 369L (415 aa).

Positions 1 to 114 are N-domain; the sequence is MGIKNLTKFI…EDVKKKTLSL (114 aa). Mg(2+) contacts are provided by Asp-34, Glu-86, Glu-198, Glu-200, Asp-219, Asp-221, and Asp-277. The segment at 163–297 is I-domain; it reads VKQRHRYDIR…VKSYELIKVQ (135 aa).

It belongs to the XPG/RAD2 endonuclease family. Mg(2+) is required as a cofactor.

The protein localises to the host nucleus. Functionally, probable endonuclease. The chain is Probable RAD2-like endonuclease 369L from Acheta domesticus (House cricket).